An 886-amino-acid polypeptide reads, in one-letter code: Alanine--tRNA ligase (886 aa).

Zn(2+) is bound by residues His-568, His-572, Cys-670, and His-674.

This sequence belongs to the class-II aminoacyl-tRNA synthetase family. Zn(2+) serves as cofactor.

It is found in the cytoplasm. It catalyses the reaction tRNA(Ala) + L-alanine + ATP = L-alanyl-tRNA(Ala) + AMP + diphosphate. Functionally, catalyzes the attachment of alanine to tRNA(Ala) in a two-step reaction: alanine is first activated by ATP to form Ala-AMP and then transferred to the acceptor end of tRNA(Ala). Also edits incorrectly charged Ser-tRNA(Ala) and Gly-tRNA(Ala) via its editing domain. The polypeptide is Alanine--tRNA ligase (Prochlorococcus marinus (strain NATL2A)).